We begin with the raw amino-acid sequence, 85 residues long: ATP synthase subunit c (85 aa).

A run of 2 helical transmembrane segments spans residues 10-30 (IAVA…FAVL) and 53-73 (FIIA…ALLF).

This sequence belongs to the ATPase C chain family. In terms of assembly, F-type ATPases have 2 components, F(1) - the catalytic core - and F(0) - the membrane proton channel. F(1) has five subunits: alpha(3), beta(3), gamma(1), delta(1), epsilon(1). F(0) has three main subunits: a(1), b(2) and c(10-14). The alpha and beta chains form an alternating ring which encloses part of the gamma chain. F(1) is attached to F(0) by a central stalk formed by the gamma and epsilon chains, while a peripheral stalk is formed by the delta and b chains.

The protein resides in the cell inner membrane. Functionally, f(1)F(0) ATP synthase produces ATP from ADP in the presence of a proton or sodium gradient. F-type ATPases consist of two structural domains, F(1) containing the extramembraneous catalytic core and F(0) containing the membrane proton channel, linked together by a central stalk and a peripheral stalk. During catalysis, ATP synthesis in the catalytic domain of F(1) is coupled via a rotary mechanism of the central stalk subunits to proton translocation. Its function is as follows. Key component of the F(0) channel; it plays a direct role in translocation across the membrane. A homomeric c-ring of between 10-14 subunits forms the central stalk rotor element with the F(1) delta and epsilon subunits. This chain is ATP synthase subunit c, found in Vibrio vulnificus (strain CMCP6).